The chain runs to 656 residues: Protein NO VEIN-LIKE (656 aa).

Positions 283 to 375 (DKDYCGKHTR…HVKQKIPKSA (93 aa)) are disordered. Acidic residues predominate over residues 299-308 (EENDSADYEV). The span at 342 to 353 (ESRNHEKSDSPK) shows a compositional bias: basic and acidic residues. Residues 354–371 (LLRRGPSKLRRGHVKQKI) are compositionally biased toward basic residues.

The protein is Protein NO VEIN-LIKE of Arabidopsis thaliana (Mouse-ear cress).